We begin with the raw amino-acid sequence, 311 residues long: tRNA dimethylallyltransferase (311 aa).

13–20 (GPTASGKT) provides a ligand contact to ATP. 15 to 20 (TASGKT) is a substrate binding site. Interaction with substrate tRNA regions lie at residues 38–41 (DSMQ) and 166–170 (QRGLR).

It belongs to the IPP transferase family. As to quaternary structure, monomer. It depends on Mg(2+) as a cofactor.

The enzyme catalyses adenosine(37) in tRNA + dimethylallyl diphosphate = N(6)-dimethylallyladenosine(37) in tRNA + diphosphate. Its function is as follows. Catalyzes the transfer of a dimethylallyl group onto the adenine at position 37 in tRNAs that read codons beginning with uridine, leading to the formation of N6-(dimethylallyl)adenosine (i(6)A). This is tRNA dimethylallyltransferase from Staphylococcus aureus (strain MSSA476).